Here is a 379-residue protein sequence, read N- to C-terminus: Histidinol-phosphate aminotransferase (379 aa).

K236 is modified (N6-(pyridoxal phosphate)lysine).

It belongs to the class-II pyridoxal-phosphate-dependent aminotransferase family. Histidinol-phosphate aminotransferase subfamily. As to quaternary structure, homodimer. It depends on pyridoxal 5'-phosphate as a cofactor.

It carries out the reaction L-histidinol phosphate + 2-oxoglutarate = 3-(imidazol-4-yl)-2-oxopropyl phosphate + L-glutamate. The protein operates within amino-acid biosynthesis; L-histidine biosynthesis; L-histidine from 5-phospho-alpha-D-ribose 1-diphosphate: step 7/9. The chain is Histidinol-phosphate aminotransferase from Desulfotalea psychrophila (strain LSv54 / DSM 12343).